The following is a 2280-amino-acid chain: Protein Ycf2 (2280 aa).

Residue 1631–1638 (GSIGTGRS) coordinates ATP.

This sequence belongs to the Ycf2 family.

The protein resides in the plastid. The protein localises to the chloroplast stroma. Probable ATPase of unknown function. Its presence in a non-photosynthetic plant (Epifagus virginiana) and experiments in tobacco indicate that it has an essential function which is probably not related to photosynthesis. The polypeptide is Protein Ycf2 (ycf2-A) (Nicotiana tabacum (Common tobacco)).